The following is a 34-amino-acid chain: Conotoxin de13a (34 aa).

4-hydroxyproline occurs at positions 3 and 7. Position 14 is a 6'-bromotryptophan (Trp-14). Lys-18 is subject to 5-hydroxylysine. Pro-21 is modified (4-hydroxyproline). Lys-25 is subject to 5-hydroxylysine. His-32 is modified (histidine amide).

Post-translationally, contains 4 disulfide bonds. In terms of processing, the diastereomeric form of 5-hydroxylysine found was not conclusively established, but it is probably 5R. As to expression, expressed by the venom duct.

It is found in the secreted. The protein is Conotoxin de13a of Conasprella delessertii (Sozon's cone).